The following is a 186-amino-acid chain: Ribosome-recycling factor (186 aa).

Belongs to the RRF family.

Its subcellular location is the cytoplasm. In terms of biological role, responsible for the release of ribosomes from messenger RNA at the termination of protein biosynthesis. May increase the efficiency of translation by recycling ribosomes from one round of translation to another. This chain is Ribosome-recycling factor, found in Rhizobium leguminosarum bv. trifolii (strain WSM2304).